Reading from the N-terminus, the 223-residue chain is Fibroblast growth factor-binding protein 2 (223 aa).

The signal sequence occupies residues methionine 1–glycine 19. Residues arginine 23–methionine 45 are disordered. Intrachain disulfides connect cysteine 43–cysteine 63, cysteine 72–cysteine 106, and cysteine 81–cysteine 117. Residues alanine 120–lysine 201 are disordered. A compositionally biased stretch (polar residues) spans histidine 125–glutamate 144. Over residues alanine 175–threonine 186 the composition is skewed to low complexity. Cysteine 206 and cysteine 214 are joined by a disulfide.

The protein belongs to the fibroblast growth factor-binding protein family. Expressed in serum, peripheral leukocytes and cytotoxic T-lymphocytes, but not in granulocytes and monocytes (at protein level).

It is found in the secreted. Its subcellular location is the extracellular space. This Homo sapiens (Human) protein is Fibroblast growth factor-binding protein 2 (FGFBP2).